A 254-amino-acid chain; its full sequence is Alcohol dehydrogenase (254 aa).

Residue 10–33 (FVAGLGGIGLDTNREIVKSGPKNL) participates in NAD(+) binding. Ser-138 contacts substrate. The active-site Proton acceptor is the Tyr-151.

The protein belongs to the short-chain dehydrogenases/reductases (SDR) family. In terms of assembly, homodimer.

It catalyses the reaction a primary alcohol + NAD(+) = an aldehyde + NADH + H(+). The catalysed reaction is a secondary alcohol + NAD(+) = a ketone + NADH + H(+). The chain is Alcohol dehydrogenase (Adh) from Scaptomyza albovittata (Fruit fly).